We begin with the raw amino-acid sequence, 655 residues long: Probable potassium transport system protein Kup (655 aa).

The next 12 membrane-spanning stretches (helical) occupy residues 19–39 (GLLI…LYVM), 42–62 (IAGG…CVFW), 102–122 (VWPA…TPPI), 132–152 (LIFN…VMLF), 161–181 (IVGK…ATLG), 214–234 (SGFW…ALYS), 246–266 (ISWI…GAWI), 282–302 (IMPE…AIIA), 338–358 (LFIP…VLWF), 370–390 (LAIN…LLII), 395–415 (FIWV…FLVA), and 420–440 (FFHG…IMII).

It belongs to the HAK/KUP transporter (TC 2.A.72) family.

The protein resides in the cell inner membrane. It catalyses the reaction K(+)(in) + H(+)(in) = K(+)(out) + H(+)(out). Functionally, transport of potassium into the cell. Likely operates as a K(+):H(+) symporter. The sequence is that of Probable potassium transport system protein Kup from Cytophaga hutchinsonii (strain ATCC 33406 / DSM 1761 / CIP 103989 / NBRC 15051 / NCIMB 9469 / D465).